Reading from the N-terminus, the 165-residue chain is Transcriptional repressor NrdR (165 aa).

A zinc finger spans residues 3 to 34; it reads CPYCGQLNNRVVDSRLSRSEFAVRRRRECLDC. Residues 49 to 139 enclose the ATP-cone domain; the sequence is VMVVKKDGRR…VYREFKDVDD (91 aa).

This sequence belongs to the NrdR family. It depends on Zn(2+) as a cofactor.

In terms of biological role, negatively regulates transcription of bacterial ribonucleotide reductase nrd genes and operons by binding to NrdR-boxes. The chain is Transcriptional repressor NrdR from Desulforapulum autotrophicum (strain ATCC 43914 / DSM 3382 / VKM B-1955 / HRM2) (Desulfobacterium autotrophicum).